A 123-amino-acid polypeptide reads, in one-letter code: Large ribosomal subunit protein uL14 (123 aa).

Belongs to the universal ribosomal protein uL14 family. As to quaternary structure, part of the 50S ribosomal subunit. Forms a cluster with proteins L3 and L19. In the 70S ribosome, L14 and L19 interact and together make contacts with the 16S rRNA in bridges B5 and B8.

Its function is as follows. Binds to 23S rRNA. Forms part of two intersubunit bridges in the 70S ribosome. The sequence is that of Large ribosomal subunit protein uL14 from Actinobacillus succinogenes (strain ATCC 55618 / DSM 22257 / CCUG 43843 / 130Z).